The primary structure comprises 365 residues: 3-dehydroquinate synthase (365 aa).

NAD(+) contacts are provided by residues glycine 106–aspartate 110, threonine 130–threonine 131, lysine 142, lysine 151, and phenylalanine 169–threonine 172. Positions 184, 247, and 264 each coordinate Zn(2+).

It belongs to the sugar phosphate cyclases superfamily. Dehydroquinate synthase family. Requires NAD(+) as cofactor. Co(2+) serves as cofactor. The cofactor is Zn(2+).

The protein resides in the cytoplasm. The enzyme catalyses 7-phospho-2-dehydro-3-deoxy-D-arabino-heptonate = 3-dehydroquinate + phosphate. The protein operates within metabolic intermediate biosynthesis; chorismate biosynthesis; chorismate from D-erythrose 4-phosphate and phosphoenolpyruvate: step 2/7. Its function is as follows. Catalyzes the conversion of 3-deoxy-D-arabino-heptulosonate 7-phosphate (DAHP) to dehydroquinate (DHQ). The sequence is that of 3-dehydroquinate synthase from Listeria monocytogenes serovar 1/2a (strain ATCC BAA-679 / EGD-e).